The primary structure comprises 615 residues: Chaperone protein DnaK (615 aa).

A Phosphothreonine; by autocatalysis modification is found at Thr175. The interval 573–615 (SQEMYQKAAQEQQAAQGAEQAQDNGPKDDNVVDADFKEVDEDK) is disordered. The segment covering 580–594 (AAQEQQAAQGAEQAQ) has biased composition (low complexity). Basic and acidic residues predominate over residues 597 to 609 (GPKDDNVVDADFK).

It belongs to the heat shock protein 70 family.

In terms of biological role, acts as a chaperone. This chain is Chaperone protein DnaK, found in Clostridioides difficile (strain 630) (Peptoclostridium difficile).